The primary structure comprises 75 residues: UPF0291 protein LMOf2365_1322 (75 aa).

The disordered stretch occupies residues 56–75; it reads DPNGTDVTPHKVKQLRKNKH. Residues 65-75 show a composition bias toward basic residues; the sequence is HKVKQLRKNKH.

This sequence belongs to the UPF0291 family.

Its subcellular location is the cytoplasm. This Listeria monocytogenes serotype 4b (strain F2365) protein is UPF0291 protein LMOf2365_1322.